A 451-amino-acid polypeptide reads, in one-letter code: ACT domain-containing protein ACR4 (451 aa).

4 ACT domains span residues 35-118, 123-200, 259-335, and 337-416; these read VIRV…VIPS, VIEL…NTPR, VVTV…VSEG, and KLEL…QEQQ. The tract at residues 409–428 is disordered; the sequence is KNNPQEQQQRQKSPSHESPT. Positions 410-420 are enriched in polar residues; the sequence is NNPQEQQQRQK.

Highly expressed in flowers and at lower levels in leaves and siliques.

May bind amino acids. The polypeptide is ACT domain-containing protein ACR4 (Arabidopsis thaliana (Mouse-ear cress)).